Reading from the N-terminus, the 413-residue chain is Imidazolonepropionase (413 aa).

The Fe(3+) site is built by His-70 and His-72. Positions 70 and 72 each coordinate Zn(2+). 4-imidazolone-5-propanoate contacts are provided by Arg-79, Tyr-142, and His-175. Tyr-142 lines the N-formimidoyl-L-glutamate pocket. Fe(3+) is bound at residue His-240. His-240 is a binding site for Zn(2+). Residue Glu-243 coordinates 4-imidazolone-5-propanoate. Asp-315 lines the Fe(3+) pocket. Asp-315 contacts Zn(2+). The N-formimidoyl-L-glutamate site is built by Asn-317 and Gly-319. Ser-320 lines the 4-imidazolone-5-propanoate pocket.

The protein belongs to the metallo-dependent hydrolases superfamily. HutI family. The cofactor is Zn(2+). Fe(3+) is required as a cofactor.

It localises to the cytoplasm. The enzyme catalyses 4-imidazolone-5-propanoate + H2O = N-formimidoyl-L-glutamate. The protein operates within amino-acid degradation; L-histidine degradation into L-glutamate; N-formimidoyl-L-glutamate from L-histidine: step 3/3. Functionally, catalyzes the hydrolytic cleavage of the carbon-nitrogen bond in imidazolone-5-propanoate to yield N-formimidoyl-L-glutamate. It is the third step in the universal histidine degradation pathway. This chain is Imidazolonepropionase, found in Treponema denticola (strain ATCC 35405 / DSM 14222 / CIP 103919 / JCM 8153 / KCTC 15104).